The following is a 263-amino-acid chain: Palmitoyltransferase ZDHHC21 (263 aa).

Over 1–4 (MKMR) the chain is Cytoplasmic. Residues 5 to 25 (LHFVVDPMGWFCMSMVFFVWI) form a helical membrane-spanning segment. The Extracellular segment spans residues 26 to 44 (YNSFLIPKLVLLPHYAEGH). The helical transmembrane segment at 45–65 (ITAEPVICYYLASLLCFSALF) threads the bilayer. At 66–131 (RASTTDPGKL…WINNCVGEDN (66 aa)) the chain is on the cytoplasmic side. In terms of domain architecture, DHHC spans 90–140 (ELCNKCNMMRPKRSHHCSRCGHCVRRMDHHCPWINNCVGEDNHWLFLQLCF). The active-site S-palmitoyl cysteine intermediate is C120. A helical membrane pass occupies residues 132 to 152 (HWLFLQLCFYTQVLSFYTLVL). Over 153 to 181 (DFCQYYYFLPLSSVDQADFAVHHELALLR) the chain is Extracellular. A helical transmembrane segment spans residues 182–202 (VSCFMGLIMFGGISSLFYTQV). Topologically, residues 203-263 (KGILTDTTTI…KLNLTIRSHV (61 aa)) are cytoplasmic.

This sequence belongs to the DHHC palmitoyltransferase family.

The protein resides in the golgi apparatus membrane. The protein localises to the golgi apparatus. It localises to the cis-Golgi network membrane. It is found in the cell membrane. It carries out the reaction L-cysteinyl-[protein] + hexadecanoyl-CoA = S-hexadecanoyl-L-cysteinyl-[protein] + CoA. Palmitoyltransferase that catalyzes the addition of palmitate onto various protein substrates. In Danio rerio (Zebrafish), this protein is Palmitoyltransferase ZDHHC21.